Here is a 222-residue protein sequence, read N- to C-terminus: Ribosome maturation factor RimM (222 aa).

Residues 1 to 22 (MTERKQGAARPLNRPLVQPQGE) are disordered. One can recognise a PRC barrel domain in the interval 145–222 (EDEFYWVDLI…RIVVDWGLDY (78 aa)).

The protein belongs to the RimM family. Binds ribosomal protein uS19.

It localises to the cytoplasm. An accessory protein needed during the final step in the assembly of 30S ribosomal subunit, possibly for assembly of the head region. Essential for efficient processing of 16S rRNA. May be needed both before and after RbfA during the maturation of 16S rRNA. It has affinity for free ribosomal 30S subunits but not for 70S ribosomes. This Cupriavidus necator (strain ATCC 17699 / DSM 428 / KCTC 22496 / NCIMB 10442 / H16 / Stanier 337) (Ralstonia eutropha) protein is Ribosome maturation factor RimM.